The following is a 251-amino-acid chain: uncharacterized protein (251 aa).

Helical transmembrane passes span 56–76 (LAVV…TLVA), 104–124 (IITV…FLLT), 184–204 (HGFV…LIIV), and 208–228 (YLIA…ANIS).

The protein localises to the membrane. This is an uncharacterized protein from Caenorhabditis elegans.